The following is a 298-amino-acid chain: Small ribosomal subunit biogenesis GTPase RsgA (298 aa).

In terms of domain architecture, CP-type G spans 67–228; it reads TNELIRPPIC…VADTPGFSSL (162 aa). 116-119 contributes to the GTP binding site; the sequence is TKMD. Phosphothreonine is present on Thr166. 171–179 contributes to the GTP binding site; that stretch reads GQSGVGKSS. Positions 252, 257, 259, and 265 each coordinate Zn(2+).

It belongs to the TRAFAC class YlqF/YawG GTPase family. RsgA subfamily. As to quaternary structure, monomer, but able to form dimers. Associates with 30S ribosomal subunit; a phospho-mimetic mutation increases association. Probably binds 16S rRNA. Zn(2+) is required as a cofactor. In terms of processing, in vitro phosphorylated mostly on Thr (with lower signal on Ser) by PrkC in the presence of poly-L-Lys or myelin basic protein, dephosphorylated by PrpC. Most in vitro phosphorylation occurs on Thr-166, in vivo phosphorylation has not been detected, but it might vary during the cell cycle.

It localises to the cytoplasm. Functionally, one of several proteins that assist in the late maturation steps of the functional core of the 30S ribosomal subunit. Helps release RbfA from mature subunits. May play a role in the assembly of ribosomal proteins into the subunit. Circularly permuted GTPase with a low level of activity and slow catalytic turnover, does not act on ATP. GTPase activity is stimulated by the presence of 30S or 70S ribosomes, phosphorylation increases stimulation. Depletion results in increased sensitivity to protein synthesis inhibitors that block the peptide channel or peptidyl transferase center on the ribosome, suggesting this protein functions in conjunction with the ribosome in vivo. Decreasing levels of protein lead to an increase in free 30S and 50S ribosomal subunits and a decrease in assembled 70S ribosomes. Suggested to serve as a specific transcription factor for proteins involved in late stages of peptidoglycan synthesis. The chain is Small ribosomal subunit biogenesis GTPase RsgA from Bacillus subtilis (strain 168).